The chain runs to 698 residues: Serine/alanine racemase (698 aa).

Topologically, residues 1–10 are cytoplasmic; that stretch reads MKNKGIDQFR. The helical transmembrane segment at 11–31 threads the bilayer; the sequence is VIAAMMVVAIHCLPLHYLWPE. Residues 32–42 are Extracellular-facing; it reads GDILITLTIFR. Residues 43–63 form a helical membrane-spanning segment; that stretch reads VAVPFFFMISGYYVFAELAVA. Residues 64-81 lie on the Cytoplasmic side of the membrane; it reads NSYPSRQRVFNFIKKQLK. Residues 82 to 102 form a helical membrane-spanning segment; the sequence is VYLLATLMFLPLALYSQTIGF. Residues 103–121 lie on the Extracellular side of the membrane; sequence DLPVGTLVQVLLVNGILYH. The helical transmembrane segment at 122 to 142 threads the bilayer; that stretch reads LWYFPALITGSLLLTSLLIHV. Topologically, residues 143–147 are cytoplasmic; the sequence is SFKKV. A helical transmembrane segment spans residues 148-168; sequence FWLAAGLYLIGLGGDSWFGLI. The Extracellular segment spans residues 169–183; sequence QQTPIEPFYTAVFHL. Residues 184-204 form a helical membrane-spanning segment; sequence LDGTRNGIFFTPLFLCLGVLV. Residues 205 to 216 are Cytoplasmic-facing; sequence RKQSEKRSLSKT. A helical membrane pass occupies residues 217–237; sequence ALFFLISLIGLLIESAYLHGF. The Extracellular segment spans residues 238–244; that stretch reads SIPKHDS. Residues 245 to 265 traverse the membrane as a helical segment; sequence MYLFLPVVLFFLFPLILRWHP. Over 266-274 the chain is Cytoplasmic; it reads HRTWKHPGQ. Residues 275–295 traverse the membrane as a helical segment; the sequence is LSLWLYLLHPYTIAGTHFLSQ. At 296 to 301 the chain is on the extracellular side; the sequence is KISILQ. The helical transmembrane segment at 302–322 threads the bilayer; sequence NNLINYLVVLILTIGFICLFL. Residues 323–698 are Cytoplasmic-facing; sequence RQKHSWFRHK…IGPRVSARIK (376 aa). The tract at residues 332-698 is racemase; it reads KQTTPVKRAV…IGPRVSARIK (367 aa). Lys371 acts as the Proton acceptor in catalysis. At Lys371 the chain carries N6-(pyridoxal phosphate)lysine. Arg465 lines the substrate pocket. The active-site Proton acceptor is Tyr597. Met646 serves as a coordination point for substrate.

In the N-terminal section; belongs to the acyltransferase 3 family. The protein in the C-terminal section; belongs to the alanine racemase family. Homodimer. Requires pyridoxal 5'-phosphate as cofactor.

The protein localises to the cell membrane. The enzyme catalyses L-alanine = D-alanine. The catalysed reaction is L-serine = D-serine. It functions in the pathway amino-acid biosynthesis; D-alanine biosynthesis; D-alanine from L-alanine: step 1/1. Its function is as follows. Catalyzes the interconversion of L-serine and D-serine, and L-alanine and D-alanine. L-alanine is racemized at a rate that is 14% of that of L-serine. Together with VanC/VanC1 and VanXYC, required for vancomycin resistance in E.gallinarum strain BM4174. This Enterococcus gallinarum protein is Serine/alanine racemase.